The sequence spans 318 residues: C1GALT1-specific chaperone 1 (318 aa).

At 1–6 (MLSESS) the chain is on the cytoplasmic side. A helical; Signal-anchor for type II membrane protein membrane pass occupies residues 7-26 (SFLKGVMLGSIFCALITMLG). Residues 27–318 (HIRIGHGNRM…FLPPNGSDND (292 aa)) are Lumenal-facing.

Belongs to the glycosyltransferase 31 family. Beta3-Gal-T subfamily. In terms of assembly, associates with core 1 beta-3-galactosyltransferase (C1GALT1), probably not with the soluble active form. Ubiquitously expressed. Abundantly expressed in salivary gland, stomach, small intestine, kidney, and testis and at intermediate levels in whole brain, cerebellum, spinal cord, thymus, spleen, trachea, lung, pancreas, ovary, and uterus.

The protein resides in the membrane. In terms of biological role, probable chaperone required for the generation of 1 O-glycan Gal-beta1-3GalNAc-alpha1-Ser/Thr (T antigen), which is a precursor for many extended O-glycans in glycoproteins. Probably acts as a specific molecular chaperone assisting the folding/stability of core 1 beta-3-galactosyltransferase (C1GALT1). This Homo sapiens (Human) protein is C1GALT1-specific chaperone 1 (C1GALT1C1).